The following is a 1237-amino-acid chain: Cilia- and flagella-associated protein 61 (1237 aa).

Residues 278–301 are disordered; the sequence is QDLSVRRSQDAELRSSSQGSQKIV. The segment covering 281–290 has biased composition (basic and acidic residues); sequence SVRRSQDAEL.

As to quaternary structure, component of axonemal radial spokes, the protein complexes that link the outer microtubule doublets with the central pair of microtubules. Interacts with CFAP91/MAATS1, ODAD2/ARMC4, RSPH3A, ROPN1, ROPN1L and RSPH9. Interacts with DYNLT1, DYNC1I2 and TUBB3. Interacts with WDR35, IFT22 and IFT81.

Its subcellular location is the cytoplasm. The protein resides in the cytoskeleton. It localises to the flagellum axoneme. Involved in sperm flagellum assembly. Plays an essential role in the formation of the radial spokes in flagellum axoneme. The polypeptide is Cilia- and flagella-associated protein 61 (Homo sapiens (Human)).